An 835-amino-acid polypeptide reads, in one-letter code: Leucine--tRNA ligase (835 aa).

Positions 42 to 52 (PYPSGRIHMGH) match the 'HIGH' region motif. The 'KMSKS' region signature appears at 612–616 (KMSKS). Lysine 615 contributes to the ATP binding site.

It belongs to the class-I aminoacyl-tRNA synthetase family.

It localises to the cytoplasm. The catalysed reaction is tRNA(Leu) + L-leucine + ATP = L-leucyl-tRNA(Leu) + AMP + diphosphate. The sequence is that of Leucine--tRNA ligase from Rhizorhabdus wittichii (strain DSM 6014 / CCUG 31198 / JCM 15750 / NBRC 105917 / EY 4224 / RW1) (Sphingomonas wittichii).